The chain runs to 75 residues: Exodeoxyribonuclease 7 small subunit (75 aa).

The protein belongs to the XseB family. Heterooligomer composed of large and small subunits.

It is found in the cytoplasm. It carries out the reaction Exonucleolytic cleavage in either 5'- to 3'- or 3'- to 5'-direction to yield nucleoside 5'-phosphates.. Its function is as follows. Bidirectionally degrades single-stranded DNA into large acid-insoluble oligonucleotides, which are then degraded further into small acid-soluble oligonucleotides. The protein is Exodeoxyribonuclease 7 small subunit of Caldanaerobacter subterraneus subsp. tengcongensis (strain DSM 15242 / JCM 11007 / NBRC 100824 / MB4) (Thermoanaerobacter tengcongensis).